Consider the following 200-residue polypeptide: Small ribosomal subunit protein eS1 (200 aa).

It belongs to the eukaryotic ribosomal protein eS1 family.

This chain is Small ribosomal subunit protein eS1, found in Thermococcus onnurineus (strain NA1).